Here is a 373-residue protein sequence, read N- to C-terminus: Flagellar P-ring protein (373 aa).

Positions 1 to 26 are cleaved as a signal peptide; the sequence is MKLFFRFVTLVAVLAMSLANVAPAWA.

This sequence belongs to the FlgI family. In terms of assembly, the basal body constitutes a major portion of the flagellar organelle and consists of four rings (L,P,S, and M) mounted on a central rod.

It localises to the periplasm. It is found in the bacterial flagellum basal body. Assembles around the rod to form the L-ring and probably protects the motor/basal body from shearing forces during rotation. The sequence is that of Flagellar P-ring protein from Rhizobium johnstonii (strain DSM 114642 / LMG 32736 / 3841) (Rhizobium leguminosarum bv. viciae).